The following is a 39-amino-acid chain: Cecropin (39 aa).

It is found in the secreted. In terms of biological role, antibacterial peptide active against Gram-negative bacterium E.coli. Has no activity against Gram-positive bacterium M.luteus. Weakly active against M.luteus. This Calliphora vicina (Blue blowfly) protein is Cecropin.